We begin with the raw amino-acid sequence, 594 residues long: Apolipoprotein N-acyltransferase (594 aa).

The span at 1 to 29 shows a compositional bias: acidic residues; the sequence is MIPAVTDDDPLEDPLDDDVAPGLDDAEPE. A disordered region spans residues 1–48; sequence MIPAVTDDDPLEDPLDDDVAPGLDDAEPEPEPRDEHDEPSRPATGSRI. The Cytoplasmic portion of the chain corresponds to 1 to 67; the sequence is MIPAVTDDDP…RFGKGVLDRC (67 aa). The span at 30 to 40 shows a compositional bias: basic and acidic residues; it reads PEPRDEHDEPS. Residues 68–87 form a helical membrane-spanning segment; that stretch reads APLSAAIGGGLALWLSFPPI. At 88–116 the chain is on the extracellular side; it reads GWWFTAFPGLALLGWVLTRTATTKAGGFG. Residues 117 to 134 form a helical membrane-spanning segment; it reads YGVLFGLAFYVPLLPWIS. At 135–138 the chain is on the cytoplasmic side; sequence GLVG. Residues 139-160 traverse the membrane as a helical segment; the sequence is AVPWLALAFAESLFCGLFGLGA. The Extracellular segment spans residues 161–221; that stretch reads VVVVRLPGWP…IGGAPLVSFA (61 aa). A helical transmembrane segment spans residues 222–239; sequence VALIGFSLTLLTAQIVWW. Topologically, residues 240–251 are cytoplasmic; the sequence is WRHGHKPGVPAP. The helical transmembrane segment at 252–269 threads the bilayer; that stretch reads AVMLPGVAIAASLLVTAL. Topologically, residues 270-554 are extracellular; the sequence is VWPQVRQSGT…TDLTPATKWG (285 aa). One can recognise a CN hydrolase domain in the interval 287 to 543; sequence VTVAAVQGNV…PAYLDNQIRL (257 aa). The active-site Proton acceptor is the Glu340. Residue Lys405 is part of the active site. Residue Cys455 is the Nucleophile of the active site. A helical membrane pass occupies residues 555 to 572; the sequence is PIVQAVLVIAGVAVLLIA. Residues 573–594 are Cytoplasmic-facing; the sequence is ILHNGRFAPRMLRRRSATTVKR.

It belongs to the CN hydrolase family. Apolipoprotein N-acyltransferase subfamily. As to quaternary structure, interacts with Ppm1 (AC A0QZ12) upon coexpression in E.coli, which increases the PPM synthase activity of Ppm1.

The protein resides in the cell membrane. The catalysed reaction is N-terminal S-1,2-diacyl-sn-glyceryl-L-cysteinyl-[lipoprotein] + a glycerophospholipid = N-acyl-S-1,2-diacyl-sn-glyceryl-L-cysteinyl-[lipoprotein] + a 2-acyl-sn-glycero-3-phospholipid + H(+). Its pathway is protein modification; lipoprotein biosynthesis (N-acyl transfer). Functionally, catalyzes the phospholipid dependent N-acylation of the N-terminal cysteine of apolipoprotein, the last step in lipoprotein maturation. Can transfer a number of fatty acids (C16 and C19, palmitic and probably tuberculostearic acids respectively are shown). Enhances the polyprenol monophosphomannose (PPM) synthase activity of Ppm1 (AC A0QZ12) without itself having PPM synthase catalytic activity. The chain is Apolipoprotein N-acyltransferase from Mycolicibacterium smegmatis (strain ATCC 700084 / mc(2)155) (Mycobacterium smegmatis).